A 159-amino-acid chain; its full sequence is 2-C-methyl-D-erythritol 2,4-cyclodiphosphate synthase (159 aa).

A divalent metal cation is bound by residues Asp-10 and His-12. Residues 10 to 12 (DVH) and 37 to 38 (HS) contribute to the 4-CDP-2-C-methyl-D-erythritol 2-phosphate site. His-45 serves as a coordination point for a divalent metal cation. Residues 59 to 61 (DIG), 64 to 68 (FLDTD), 103 to 109 (AQAPKML), 135 to 138 (TTTE), Phe-142, and Arg-145 contribute to the 4-CDP-2-C-methyl-D-erythritol 2-phosphate site.

This sequence belongs to the IspF family. In terms of assembly, homotrimer. Requires a divalent metal cation as cofactor.

It catalyses the reaction 4-CDP-2-C-methyl-D-erythritol 2-phosphate = 2-C-methyl-D-erythritol 2,4-cyclic diphosphate + CMP. The protein operates within isoprenoid biosynthesis; isopentenyl diphosphate biosynthesis via DXP pathway; isopentenyl diphosphate from 1-deoxy-D-xylulose 5-phosphate: step 4/6. In terms of biological role, involved in the biosynthesis of isopentenyl diphosphate (IPP) and dimethylallyl diphosphate (DMAPP), two major building blocks of isoprenoid compounds. Catalyzes the conversion of 4-diphosphocytidyl-2-C-methyl-D-erythritol 2-phosphate (CDP-ME2P) to 2-C-methyl-D-erythritol 2,4-cyclodiphosphate (ME-CPP) with a corresponding release of cytidine 5-monophosphate (CMP). This Francisella tularensis subsp. holarctica (strain OSU18) protein is 2-C-methyl-D-erythritol 2,4-cyclodiphosphate synthase.